The sequence spans 154 residues: Large ribosomal subunit protein uL22c (154 aa).

It belongs to the universal ribosomal protein uL22 family. Part of the 50S ribosomal subunit.

It localises to the plastid. The protein localises to the chloroplast. Functionally, this protein binds specifically to 23S rRNA. In terms of biological role, the globular domain of the protein is located near the polypeptide exit tunnel on the outside of the subunit, while an extended beta-hairpin is found that lines the wall of the exit tunnel in the center of the 70S ribosome. This is Large ribosomal subunit protein uL22c (rpl22) from Platanus occidentalis (Sycamore).